We begin with the raw amino-acid sequence, 66 residues long: Large ribosomal subunit protein bL33c (66 aa).

This sequence belongs to the bacterial ribosomal protein bL33 family.

The protein resides in the plastid. It localises to the chloroplast. The sequence is that of Large ribosomal subunit protein bL33c from Oryza nivara (Indian wild rice).